The primary structure comprises 955 residues: Vacuolar membrane protease (955 aa).

Residues 1–16 (MASLRLPRANPLAFTR) are Cytoplasmic-facing. Residues 17–37 (WPVTVITAIVYLALLIPLLVV) form a helical membrane-spanning segment. The Vacuolar segment spans residues 38-390 (HHVVPSAPSS…STFVLFQLHT (353 aa)). N-linked (GlcNAc...) asparagine glycans are attached at residues asparagine 53 and asparagine 119. 2 residues coordinate Zn(2+): histidine 174 and aspartate 186. Glutamate 220 acts as the Proton acceptor in catalysis. The Zn(2+) site is built by glutamate 221, glutamate 246, and histidine 319. Residues 391 to 411 (LFALLVTLLIVGPLTLLFTSI) traverse the membrane as a helical segment. The Cytoplasmic portion of the chain corresponds to 412–442 (ALTKADKMYLFRSSAKSEDRLDVVPLQGLRG). The helical transmembrane segment at 443–463 (FFRFPFLFGIPTVVTVGLAYL) threads the bilayer. Over 464-473 (VTKVNPYIIH) the chain is Vacuolar. The helical transmembrane segment at 474–494 (SSAYAVWSMMVAAWVFLAWFV) threads the bilayer. The Cytoplasmic segment spans residues 495–508 (SRVADFARPSAFHR). A helical membrane pass occupies residues 509–529 (IYTLTWMYVLSWVSAVIATVY). The Vacuolar portion of the chain corresponds to 530-533 (ANQR). The chain crosses the membrane as a helical span at residues 534–554 (GLAGGYFIFFFHAGIFLAKWI). Residues 555–656 (SYLELFALPS…WSYALPKWTW (102 aa)) lie on the Cytoplasmic side of the membrane. Positions 574–590 (SASGRASGHGSRRGTTS) are enriched in low complexity. A disordered region spans residues 574–611 (SASGRASGHGSRRGTTSGEDDGEEAEEEPTESTSLLGS). Over residues 591–603 (GEDDGEEAEEEPT) the composition is skewed to acidic residues. A helical transmembrane segment spans residues 657–677 (VLQLLLTAPITLIMVGPLALL). The Vacuolar portion of the chain corresponds to 678-693 (TISAISQTGQDGGHPL). A helical membrane pass occupies residues 694-714 (FAYVAIAIFTTIMLTPLLPFI). Over 715 to 721 (HRYTYHV) the chain is Cytoplasmic. Residues 722 to 742 (PLFLLAVFLGTLIYNLVAFPF) form a helical membrane-spanning segment. Residues 743–955 (SDSNRLKLYY…RRAFEIGNDD (213 aa)) are Vacuolar-facing. An N-linked (GlcNAc...) asparagine glycan is attached at asparagine 826.

The protein belongs to the peptidase M28 family. Zn(2+) is required as a cofactor.

It localises to the vacuole membrane. Its function is as follows. May be involved in vacuolar sorting and osmoregulation. The chain is Vacuolar membrane protease from Aspergillus oryzae (strain ATCC 42149 / RIB 40) (Yellow koji mold).